Consider the following 389-residue polypeptide: Sulfate adenylyltransferase (389 aa).

Belongs to the sulfate adenylyltransferase family.

It carries out the reaction sulfate + ATP + H(+) = adenosine 5'-phosphosulfate + diphosphate. It functions in the pathway sulfur metabolism; hydrogen sulfide biosynthesis; sulfite from sulfate: step 1/3. The polypeptide is Sulfate adenylyltransferase (Deinococcus deserti (strain DSM 17065 / CIP 109153 / LMG 22923 / VCD115)).